We begin with the raw amino-acid sequence, 284 residues long: Methylglyoxal reductase YeaE (284 aa).

The protein belongs to the aldo/keto reductase family.

It carries out the reaction hydroxyacetone + NADP(+) = methylglyoxal + NADPH + H(+). It catalyses the reaction a primary alcohol + NADP(+) = an aldehyde + NADPH + H(+). Aldo-keto reductase that contributes to cellular methylglyoxal detoxification by catalyzing the NADPH-dependent conversion of methylglyoxal to acetol. It also exhibits activity with glyoxal and probably plays a significant role in detoxification of glyoxal in vivo. Can also use aromatic aldehydes such as 4-nitrobenzaldehyde, 3-nitrobenzaldehyde and benzaldehyde, and phenylglyoxal. The chain is Methylglyoxal reductase YeaE (yeaE) from Escherichia coli (strain K12).